The chain runs to 333 residues: Anthranilate phosphoribosyltransferase (333 aa).

5-phospho-alpha-D-ribose 1-diphosphate is bound by residues Gly81, 84 to 85 (GD), Thr89, 91 to 94 (NIST), 109 to 117 (KHGNRSVSS), and Ser121. Residue Gly81 coordinates anthranilate. A Mg(2+)-binding site is contributed by Ser93. Asn112 is a binding site for anthranilate. Residue Arg167 participates in anthranilate binding. Mg(2+) contacts are provided by Asp225 and Glu226.

This sequence belongs to the anthranilate phosphoribosyltransferase family. In terms of assembly, homodimer. The cofactor is Mg(2+).

The catalysed reaction is N-(5-phospho-beta-D-ribosyl)anthranilate + diphosphate = 5-phospho-alpha-D-ribose 1-diphosphate + anthranilate. It participates in amino-acid biosynthesis; L-tryptophan biosynthesis; L-tryptophan from chorismate: step 2/5. Functionally, catalyzes the transfer of the phosphoribosyl group of 5-phosphorylribose-1-pyrophosphate (PRPP) to anthranilate to yield N-(5'-phosphoribosyl)-anthranilate (PRA). The polypeptide is Anthranilate phosphoribosyltransferase (Glaesserella parasuis serovar 5 (strain SH0165) (Haemophilus parasuis)).